Reading from the N-terminus, the 467-residue chain is MAP kinase-interacting serine/threonine-protein kinase 2 (467 aa).

One can recognise a Protein kinase domain in the interval 83-367 (QLQQEILGEG…AAQVLQHPWV (285 aa)). ATP-binding positions include 89-97 (LGEGAYAKV) and lysine 112. Aspartate 204 (proton acceptor) is an active-site residue. Positions 298, 310, and 313 each coordinate Zn(2+). The tract at residues 432–467 (MQLSPPSESKLAKRRQQGSKGGISPPSLAPLLIVSD) is disordered.

This sequence belongs to the protein kinase superfamily. CAMK Ser/Thr protein kinase family. Requires Mg(2+) as cofactor. Zn(2+) serves as cofactor.

The enzyme catalyses L-seryl-[protein] + ATP = O-phospho-L-seryl-[protein] + ADP + H(+). It catalyses the reaction L-threonyl-[protein] + ATP = O-phospho-L-threonyl-[protein] + ADP + H(+). Its function is as follows. May play a role in the response to environmental stress and cytokines. Appears to regulate translation by phosphorylating EIF4E, thus increasing the affinity of this protein for the 7-methylguanosine-containing mRNA cap. The protein is MAP kinase-interacting serine/threonine-protein kinase 2 (mknk2) of Xenopus laevis (African clawed frog).